A 345-amino-acid polypeptide reads, in one-letter code: Phosphate acyltransferase (345 aa).

It belongs to the PlsX family. In terms of assembly, homodimer. Probably interacts with PlsY.

The protein localises to the cytoplasm. It catalyses the reaction a fatty acyl-[ACP] + phosphate = an acyl phosphate + holo-[ACP]. It functions in the pathway lipid metabolism; phospholipid metabolism. Its function is as follows. Catalyzes the reversible formation of acyl-phosphate (acyl-PO(4)) from acyl-[acyl-carrier-protein] (acyl-ACP). This enzyme utilizes acyl-ACP as fatty acyl donor, but not acyl-CoA. This is Phosphate acyltransferase from Wolbachia sp. subsp. Brugia malayi (strain TRS).